Reading from the N-terminus, the 101-residue chain is MEPVDPNREPWNHPGSQPKTACTNCYCKKCCYHCQVCFLQKGLGISYGRKKRRQRRSAPPGSKTHQDLIPKQPLSQTQRKPTGPEESKKEVESKAEPDRFD.

An interaction with human CREBBP region spans residues 1-24 (MEPVDPNREPWNHPGSQPKTACTN). Positions 1–48 (MEPVDPNREPWNHPGSQPKTACTNCYCKKCCYHCQVCFLQKGLGISYG) are transactivation. Residues Cys22, Cys25, and Cys27 each contribute to the Zn(2+) site. A cysteine-rich region spans residues 22–37 (CTNCYCKKCCYHCQVC). Residue Lys28 is modified to N6-acetyllysine; by host PCAF. Zn(2+) contacts are provided by Cys30, His33, Cys34, and Cys37. The core stretch occupies residues 38–48 (FLQKGLGISYG). A disordered region spans residues 48-101 (GRKKRRQRRSAPPGSKTHQDLIPKQPLSQTQRKPTGPEESKKEVESKAEPDRFD). The short motif at 49-57 (RKKRRQRRS) is the Nuclear localization signal, RNA-binding (TAR), and protein transduction element. The interval 49–86 (RKKRRQRRSAPPGSKTHQDLIPKQPLSQTQRKPTGPEE) is interaction with the host capping enzyme RNGTT. N6-acetyllysine; by host EP300 and GCN5L2 is present on residues Lys50 and Lys51. Asymmetric dimethylarginine; by host PRMT6 is present on residues Arg52 and Arg53. Residue Lys71 forms a Glycyl lysine isopeptide (Lys-Gly) (interchain with G-Cter in ubiquitin) linkage. A compositionally biased stretch (basic and acidic residues) spans 82–101 (TGPEESKKEVESKAEPDRFD).

It belongs to the lentiviruses Tat family. As to quaternary structure, interacts with host CCNT1. Associates with the P-TEFb complex composed at least of Tat, P-TEFb (CDK9 and CCNT1), TAR RNA, RNA Pol II. Recruits the HATs CREBBP, TAF1/TFIID, EP300, PCAF and GCN5L2. Interacts with host KAT5/Tip60; this interaction targets the latter to degradation. Interacts with the host deacetylase SIRT1. Interacts with host capping enzyme RNGTT; this interaction stimulates RNGTT. Binds to host KDR, and to the host integrins ITGAV/ITGB3 and ITGA5/ITGB1. Interacts with host KPNB1/importin beta-1 without previous binding to KPNA1/importin alpha-1. Interacts with EIF2AK2. Interacts with host nucleosome assembly protein NAP1L1; this interaction may be required for the transport of Tat within the nucleus, since the two proteins interact at the nuclear rim. Interacts with host C1QBP/SF2P32; this interaction involves lysine-acetylated Tat. Interacts with the host chemokine receptors CCR2, CCR3 and CXCR4. Interacts with host DPP4/CD26; this interaction may trigger an anti-proliferative effect. Interacts with host LDLR. Interacts with the host extracellular matrix metalloproteinase MMP1. Interacts with host PRMT6; this interaction mediates Tat's methylation. Interacts with, and is ubiquitinated by MDM2/Hdm2. Interacts with host PSMC3 and HTATIP2. Interacts with STAB1; this interaction may overcome SATB1-mediated repression of IL2 and IL2RA (interleukin) in T cells by binding to the same domain than HDAC1. Interacts (when acetylated) with human CDK13, thereby increasing HIV-1 mRNA splicing and promoting the production of the doubly spliced HIV-1 protein Nef. Interacts with host TBP; this interaction modulates the activity of transcriptional pre-initiation complex. Interacts with host RELA. Interacts with host PLSCR1; this interaction negatively regulates Tat transactivation activity by altering its subcellular distribution. In terms of processing, asymmetrical arginine methylation by host PRMT6 seems to diminish the transactivation capacity of Tat and affects the interaction with host CCNT1. Acetylation by EP300, CREBBP, GCN5L2/GCN5 and PCAF regulates the transactivation activity of Tat. EP300-mediated acetylation of Lys-50 promotes dissociation of Tat from the TAR RNA through the competitive binding to PCAF's bromodomain. In addition, the non-acetylated Tat's N-terminus can also interact with PCAF. PCAF-mediated acetylation of Lys-28 enhances Tat's binding to CCNT1. Lys-50 is deacetylated by SIRT1. Post-translationally, polyubiquitination by host MDM2 does not target Tat to degradation, but activates its transactivation function and fosters interaction with CCNT1 and TAR RNA. In terms of processing, phosphorylated by EIF2AK2 on serine and threonine residues adjacent to the basic region important for TAR RNA binding and function. Phosphorylation of Tat by EIF2AK2 is dependent on the prior activation of EIF2AK2 by dsRNA.

Its subcellular location is the host nucleus. It is found in the host nucleolus. The protein localises to the host cytoplasm. The protein resides in the secreted. Its function is as follows. Transcriptional activator that increases RNA Pol II processivity, thereby increasing the level of full-length viral transcripts. Recognizes a hairpin structure at the 5'-LTR of the nascent viral mRNAs referred to as the transactivation responsive RNA element (TAR) and recruits the cyclin T1-CDK9 complex (P-TEFb complex) that will in turn hyperphosphorylate the RNA polymerase II to allow efficient elongation. The CDK9 component of P-TEFb and other Tat-activated kinases hyperphosphorylate the C-terminus of RNA Pol II that becomes stabilized and much more processive. Other factors such as HTATSF1/Tat-SF1, SUPT5H/SPT5, and HTATIP2 are also important for Tat's function. Besides its effect on RNA Pol II processivity, Tat induces chromatin remodeling of proviral genes by recruiting the histone acetyltransferases (HATs) CREBBP, EP300 and PCAF to the chromatin. This also contributes to the increase in proviral transcription rate, especially when the provirus integrates in transcriptionally silent region of the host genome. To ensure maximal activation of the LTR, Tat mediates nuclear translocation of NF-kappa-B by interacting with host RELA. Through its interaction with host TBP, Tat may also modulate transcription initiation. Tat can reactivate a latently infected cell by penetrating in it and transactivating its LTR promoter. In the cytoplasm, Tat is thought to act as a translational activator of HIV-1 mRNAs. Extracellular circulating Tat can be endocytosed by surrounding uninfected cells via the binding to several surface receptors such as CD26, CXCR4, heparan sulfate proteoglycans (HSPG) or LDLR. Neurons are rarely infected, but they internalize Tat via their LDLR. Through its interaction with nuclear HATs, Tat is potentially able to control the acetylation-dependent cellular gene expression. Modulates the expression of many cellular genes involved in cell survival, proliferation or in coding for cytokines or cytokine receptors. Tat plays a role in T-cell and neurons apoptosis. Tat induced neurotoxicity and apoptosis probably contribute to neuroAIDS. Circulating Tat also acts as a chemokine-like and/or growth factor-like molecule that binds to specific receptors on the surface of the cells, affecting many cellular pathways. In the vascular system, Tat binds to ITGAV/ITGB3 and ITGA5/ITGB1 integrins dimers at the surface of endothelial cells and competes with bFGF for heparin-binding sites, leading to an excess of soluble bFGF. This chain is Protein Tat, found in Homo sapiens (Human).